The primary structure comprises 29 residues: Cyclotide mden-B (29 aa).

The cyclopeptide (Gly-Asn) cross-link spans 1 to 29 (GLPICGETCFTGKCYTPGCTCSYPICKKN). Disulfide bonds link C5/C19, C9/C21, and C14/C26.

The protein belongs to the cyclotide family. Moebius subfamily. Post-translationally, this is a cyclic peptide.

Probably participates in a plant defense mechanism. This is Cyclotide mden-B from Melicytus dentatus (Tree violet).